A 271-amino-acid chain; its full sequence is ATP synthase subunit a (271 aa).

5 consecutive transmembrane segments (helical) span residues 31–51 (WDTI…GLYM), 89–109 (FVAP…WIGV), 124–144 (DINL…IVSL), 186–206 (IFSG…VLWL), and 216–236 (LGVG…YYAF). The disordered stretch occupies residues 247 to 271 (DEHADGGDSSSRQASPTPLPAGQVR).

It belongs to the ATPase A chain family. In terms of assembly, F-type ATPases have 2 components, CF(1) - the catalytic core - and CF(0) - the membrane proton channel. CF(1) has five subunits: alpha(3), beta(3), gamma(1), delta(1), epsilon(1). CF(0) has three main subunits: a(1), b(2) and c(9-12). The alpha and beta chains form an alternating ring which encloses part of the gamma chain. CF(1) is attached to CF(0) by a central stalk formed by the gamma and epsilon chains, while a peripheral stalk is formed by the delta and b chains.

It is found in the cell membrane. Key component of the proton channel; it plays a direct role in the translocation of protons across the membrane. The protein is ATP synthase subunit a of Acidothermus cellulolyticus (strain ATCC 43068 / DSM 8971 / 11B).